The following is a 293-amino-acid chain: Digeranylgeranylglyceryl phosphate synthase (293 aa).

Transmembrane regions (helical) follow at residues 26–46 (LMYG…FSDL), 50–70 (LLGY…NDYF), 107–127 (FVAA…VSVL), 140–160 (FAGN…GSII), 215–235 (IASL…FLLP), 237–257 (FLFD…LIYV), and 273–293 (YRKV…AGAF).

The protein belongs to the UbiA prenyltransferase family. DGGGP synthase subfamily. Mg(2+) is required as a cofactor.

It is found in the cell membrane. The enzyme catalyses sn-3-O-(geranylgeranyl)glycerol 1-phosphate + (2E,6E,10E)-geranylgeranyl diphosphate = 2,3-bis-O-(geranylgeranyl)-sn-glycerol 1-phosphate + diphosphate. It functions in the pathway membrane lipid metabolism; glycerophospholipid metabolism. Prenyltransferase that catalyzes the transfer of the geranylgeranyl moiety of geranylgeranyl diphosphate (GGPP) to the C2 hydroxyl of (S)-3-O-geranylgeranylglyceryl phosphate (GGGP). This reaction is the second ether-bond-formation step in the biosynthesis of archaeal membrane lipids. This is Digeranylgeranylglyceryl phosphate synthase from Archaeoglobus fulgidus (strain ATCC 49558 / DSM 4304 / JCM 9628 / NBRC 100126 / VC-16).